Reading from the N-terminus, the 338-residue chain is Glyceraldehyde-3-phosphate dehydrogenase (338 aa).

NAD(+) is bound by residues 12–13 (RI), Asp34, and Arg79. D-glyceraldehyde 3-phosphate is bound by residues 150–152 (SCT), Thr181, 210–211 (TG), and Arg233. Residue Cys151 is the Nucleophile of the active site. Asn315 lines the NAD(+) pocket.

It belongs to the glyceraldehyde-3-phosphate dehydrogenase family. In terms of assembly, homotetramer.

It is found in the cytoplasm. It carries out the reaction D-glyceraldehyde 3-phosphate + phosphate + NAD(+) = (2R)-3-phospho-glyceroyl phosphate + NADH + H(+). The protein operates within carbohydrate degradation; glycolysis; pyruvate from D-glyceraldehyde 3-phosphate: step 1/5. This is Glyceraldehyde-3-phosphate dehydrogenase (GPD) from Sordaria macrospora.